The sequence spans 237 residues: 3-oxoacyl-[acyl-carrier-protein] reductase (237 aa).

M1 is modified (N-acetylmethionine). NADP(+) is bound by residues 11 to 14 (SRGI), 34 to 35 (RN), D56, and 83 to 85 (AAG). S135 serves as a coordination point for substrate. Residues Y148, K152, and 181-183 (IHT) each bind NADP(+). Y148 (proton acceptor) is an active-site residue. The residue at position 195 (K195) is an N6-acetyllysine.

It belongs to the short-chain dehydrogenases/reductases (SDR) family. As to quaternary structure, homotetramer (in vitro). Heterotetramer with HSD17B8; contains two molecules each of HSD17B8 and CBR4. Does not form homotetramers when HSD17B8 is coexpressed, only heterotetramers (in vitro).

The protein resides in the mitochondrion matrix. The enzyme catalyses a (3R)-hydroxyacyl-[ACP] + NADP(+) = a 3-oxoacyl-[ACP] + NADPH + H(+). It carries out the reaction a quinone + NADPH + H(+) = a quinol + NADP(+). It functions in the pathway lipid metabolism; fatty acid biosynthesis. Functionally, component of the heterotetramer complex KAR (3-ketoacyl-[acyl carrier protein] reductase or 3-ketoacyl-[ACP] reductase) that forms part of the mitochondrial fatty acid synthase (mtFAS). Beta-subunit of the KAR heterotetramer complex, responsible for the 3-ketoacyl-ACP reductase activity of the mtFAS, reduces 3-oxoacyl-[ACP] to (3R)-hydroxyacyl-[ACP] in a NADPH-dependent manner with no chain length preference, thereby participating in mitochondrial fatty acid biosynthesis. The homotetramer has NADPH-dependent quinone reductase activity (in vitro), hence could play a role in protection against cytotoxicity of exogenous quinones. As a heterotetramer, it can also reduce 9,10-phenanthrenequinone, 1,4-benzoquinone and various other o-quinones and p-quinones (in vitro). The chain is 3-oxoacyl-[acyl-carrier-protein] reductase (CBR4) from Bos taurus (Bovine).